A 436-amino-acid polypeptide reads, in one-letter code: Acetyl-CoA decarbonylase/synthase complex subunit delta 1 (436 aa).

The protein belongs to the CdhD family. In terms of assembly, heterodimer of delta and gamma chains. The ACDS complex is made up of alpha, epsilon, beta, gamma and delta chains with a probable stoichiometry of (alpha(2)epsilon(2))(4)-beta(8)-(gamma(1)delta(1))(8) (Potential).

Its pathway is one-carbon metabolism; methanogenesis from acetate. Part of a complex that catalyzes the reversible cleavage of acetyl-CoA, allowing growth on acetate as sole source of carbon and energy. Probably maintains the overall quaternary structure of the ACDS complex. The chain is Acetyl-CoA decarbonylase/synthase complex subunit delta 1 (cdhD1) from Methanosarcina acetivorans (strain ATCC 35395 / DSM 2834 / JCM 12185 / C2A).